A 603-amino-acid chain; its full sequence is MSNLYSAGTPHIQELQNILDSQQEEWAAIKENYTTQNSLIAKENCTLKMKLSELENKVSQLIRENVQLRSQVSLNKLEFQNKLASQINVLENGVIQRLEEVLYMFDSIRKKESLPSRPTSTNETVDRIKKRRQSNEEARNRRRSRSVSTGSAHSTSSMKRRSSTFGEDLIDASIKRALDNAQSNSLQTSDTLRLSELPGLNEIDTNNVNNDNLLSPIPHKKRKSNRRKSIYVPELPKPNNEPLMENTIEQQENICSESLIQEGEQSEKLGENLDADQSHVEDQSFSFTNSVLEYSIPEENTLPKQDILDETEKRDTAVNQKKKLEIFHDPPVEELSSSKNEKPPENSITNDPAFITVTGNNKVKHSMKSRKPKKNKGSVDESMPCTQSTESVDFDRPRRTRGKTVDYRLPSLRAKMRRPTEKLVDATTTVNIQDLQVKYKKSKKVLEKELKTDMKAMKSPKKNEKTFESGTIFKKISRDNESRPSSTHSTSSVDAECSHNNSHSENINSSINDTTHSSFNNSTKSVLSDITNISKNKQQQKTKKLLKTAIINDIYDDKTKNAQKTVSFRVNEDDLSVFDLIQHNDTNKSSPKTYRSRSRKNKA.

A coiled-coil region spans residues 11 to 74 (HIQELQNILD…NVQLRSQVSL (64 aa)). 2 disordered regions span residues 112–164 (ESLP…RSST) and 201–227 (NEIDTNNVNNDNLLSPIPHKKRKSNRR). Composition is skewed to low complexity over residues 146 to 157 (SVSTGSAHSTSS) and 201 to 214 (NEIDTNNVNNDNLL). Basic residues predominate over residues 218-227 (PHKKRKSNRR). Residues 304 to 325 (KQDILDETEKRDTAVNQKKKLE) adopt a coiled-coil conformation. The tract at residues 331–399 (PVEELSSSKN…ESVDFDRPRR (69 aa)) is disordered. Basic residues predominate over residues 362 to 376 (KVKHSMKSRKPKKNK). Residues 431-451 (NIQDLQVKYKKSKKVLEKELK) are a coiled coil. The span at 455 to 467 (KAMKSPKKNEKTF) shows a compositional bias: basic and acidic residues. 2 disordered regions span residues 455–519 (KAMK…HSSF) and 583–603 (HNDTNKSSPKTYRSRSRKNKA). Residues 483 to 512 (RPSSTHSTSSVDAECSHNNSHSENINSSIN) are compositionally biased toward low complexity. A compositionally biased stretch (polar residues) spans 583 to 593 (HNDTNKSSPKT). The segment covering 594–603 (YRSRSRKNKA) has biased composition (basic residues).

The protein belongs to the shugoshin family.

Its subcellular location is the nucleus. The protein resides in the chromosome. The protein localises to the centromere. In terms of biological role, plays a central role in chromosome cohesion during cell division by preventing premature dissociation of cohesin complex from centromeres after prophase, when most of cohesin complex dissociates from chromosomes arms. The polypeptide is Shugoshin (SGO1) (Candida glabrata (strain ATCC 2001 / BCRC 20586 / JCM 3761 / NBRC 0622 / NRRL Y-65 / CBS 138) (Yeast)).